The sequence spans 121 residues: Insulin-like peptide 01 (121 aa).

Residues Met-1–Ser-24 form the signal peptide. Positions Asn-25–Met-45 are excised as a propeptide. 3 disulfide bridges follow: Cys-52/Cys-107, Cys-64/Cys-120, and Cys-106/Cys-111. The propeptide at Arg-69 to Arg-97 is c peptide.

This sequence belongs to the insulin family.

Its subcellular location is the secreted. In terms of biological role, insulin decreases blood glucose concentration. May have evolved to activate insulin receptors (INSR) in vertebrates. Molecular docking studies reveals unique interaction with the human insulin receptor. In vivo, insulin-like peptide injection reduces blood glucose levels in two models of zebrafish diabetes (streptozotocin- and glucose-induced). Also shorter swimming distance of zebrafish larvae, an effect which is not observed with human insulin. This Exaiptasia diaphana (Tropical sea anemone) protein is Insulin-like peptide 01.